Here is a 606-residue protein sequence, read N- to C-terminus: Endonuclease 8-like 3 (606 aa).

Residue V2 is the Schiff-base intermediate with DNA; via amino nitrogen of the active site. The DNA site is built by N193 and R272. An FPG-type zinc finger spans residues 248 to 282 (KVYKRPNCDQCHSKITVCRFGENSRMTYFCPHCQK). The segment at 318–347 (SEEQWSCVVCTLINRPSAKACDACLTTRPL) adopts a RanBP2-type zinc-finger fold. S451 is modified (phosphoserine). Positions 479 to 494 (KSYNSGLSNSELQTNR) are enriched in polar residues. Residues 479–506 (KSYNSGLSNSELQTNRTRGHHSKSDGSP) are disordered. Residues C508, H511, C534, C542, C555, H557, C580, and C588 each contribute to the Zn(2+) site. 2 consecutive GRF-type zinc fingers follow at residues 508-551 (CKMH…ADLS) and 555-597 (CRHG…AENG).

The protein belongs to the FPG family. As to expression, expressed in testis, thymus, spleen and bone marrow. In young mice, expressed at higher levels in thymocytes than splenocytes. At 12 dpc, abundant in the subventricular zone (SVZ) of the lateral ventricles. At 17.5 dpc and P0, expression is limited to distinct cells in the cortical SVZ, in cells of the secondary matrix, the dentate gyrus migratory route and the dentate gyrus.

Its subcellular location is the nucleus. It localises to the chromosome. The enzyme catalyses 2'-deoxyribonucleotide-(2'-deoxyribose 5'-phosphate)-2'-deoxyribonucleotide-DNA = a 3'-end 2'-deoxyribonucleotide-(2,3-dehydro-2,3-deoxyribose 5'-phosphate)-DNA + a 5'-end 5'-phospho-2'-deoxyribonucleoside-DNA + H(+). Its function is as follows. DNA glycosylase which prefers single-stranded DNA (ssDNA), or partially ssDNA structures such as bubble and fork structures, to double-stranded DNA (dsDNA). Mediates interstrand cross-link repair in response to replication stress: acts by mediating DNA glycosylase activity, cleaving one of the two N-glycosyl bonds comprising the interstrand cross-link, which avoids the formation of a double-strand break but generates an abasic site that is bypassed by translesion synthesis polymerases. In vitro, displays strong glycosylase activity towards the hydantoin lesions spiroiminodihydantoin (Sp) and guanidinohydantoin (Gh) in both ssDNA and dsDNA; also recognizes FapyA, FapyG, 5-OHU, 5-OHC, 5-OHMH, Tg and 8-oxoA lesions in ssDNA. No activity on 8-oxoG detected. Also shows weak DNA-(apurinic or apyrimidinic site) lyase activity. In vivo, appears to be the primary enzyme involved in removing Sp and Gh from ssDNA in neonatal tissues. The protein is Endonuclease 8-like 3 (Neil3) of Mus musculus (Mouse).